Here is a 534-residue protein sequence, read N- to C-terminus: Pentatricopeptide repeat-containing protein At5g50990 (534 aa).

6 PPR repeats span residues 128–158 (NVITWNLMIGGYVRNVQYEEALKALKNMLSF), 164–198 (NKFSFASSLAACARLGDLHHAKWVHSLMIDSGIEL), 199–229 (NAILSSALVDVYAKCGDIGTSREVFYSVKRN), 230–264 (DVSIWNAMITGFATHGLATEAIRVFSEMEAEHVSP), 265–295 (DSITFLGLLTTCSHCGLLEEGKEYFGLMSRR), and 301–331 (KLEHYGAMVDLLGRAGRVKEAYELIESMPIE). The interval 336–408 (IWRSLLSSSR…AKGKSWLEFG (73 aa)) is type E motif. A type E(+) motif region spans residues 409-439 (GMIHRFKAGDTSHIETKAIYKVLEGLIQKTK). A type DYW motif region spans residues 440–534 (SQGFVSDTDL…DGLCSCRDYW (95 aa)).

Belongs to the PPR family. PCMP-H subfamily.

The sequence is that of Pentatricopeptide repeat-containing protein At5g50990 (PCMP-H59) from Arabidopsis thaliana (Mouse-ear cress).